We begin with the raw amino-acid sequence, 343 residues long: Heat-inducible transcription repressor HrcA (343 aa).

It belongs to the HrcA family.

Negative regulator of class I heat shock genes (grpE-dnaK-dnaJ and groELS operons). Prevents heat-shock induction of these operons. The polypeptide is Heat-inducible transcription repressor HrcA (Thermobifida fusca (strain YX)).